We begin with the raw amino-acid sequence, 496 residues long: Genome polyprotein (496 aa).

Over 1–447 (SRCTHLENRD…HTVLGGAFNS (447 aa)) the chain is Extracellular. 6 disulfides stabilise this stretch: C3/C30, C60/C116, C60/C121, C74/C105, C92/C116, and C92/C121. The tract at residues 98–111 (DRGWGNHCGLFGKG) is fusion peptide. A glycan (N-linked (GlcNAc...) asparagine; by host) is linked at N154. 2 disulfide bridges follow: C186–C290 and C307–C338. Residues 448–468 (IFGGVGFLPKLLMGVALAWLG) traverse the membrane as a helical segment. Residues 469–479 (LNTRNPTMSMS) lie on the Cytoplasmic side of the membrane. Residues 480-496 (FLMAGGLVLAMTLGVGA) form a helical membrane-spanning segment.

Homodimer; in the endoplasmic reticulum and Golgi. In terms of processing, N-glycosylated.

It localises to the virion membrane. It is found in the host endoplasmic reticulum membrane. Its function is as follows. Binds to host cell surface receptor and mediates fusion between viral and cellular membranes. Envelope protein is synthesized in the endoplasmic reticulum in the form of heterodimer with protein prM. They play a role in virion budding in the ER, and the newly formed immature particle is covered with 60 spikes composed of heterodimer between precursor prM and envelope protein E. The virion is transported to the Golgi apparatus where the low pH causes dissociation of PrM-E heterodimers and formation of E homodimers. prM-E cleavage is ineficient, and many virions are only partially matured. These uncleaved prM would play a role in immune evasion. The sequence is that of Genome polyprotein from Bos taurus (Bovine).